Here is a 375-residue protein sequence, read N- to C-terminus: Alcohol dehydrogenase 1 (375 aa).

An N-acetylserine modification is found at S1. The Zn(2+) site is built by C46, H67, C97, C100, C103, C111, and C175. NAD(+)-binding positions include 200-205 (GLGGVG), D224, K229, 293-295 (VGV), and R370.

It belongs to the zinc-containing alcohol dehydrogenase family. Class-I subfamily. Homodimer. Zn(2+) is required as a cofactor.

Its subcellular location is the cytoplasm. It carries out the reaction a primary alcohol + NAD(+) = an aldehyde + NADH + H(+). The enzyme catalyses a secondary alcohol + NAD(+) = a ketone + NADH + H(+). The protein is Alcohol dehydrogenase 1 (ADH1) of Coturnix japonica (Japanese quail).